A 292-amino-acid chain; its full sequence is 4-hydroxy-tetrahydrodipicolinate synthase (292 aa).

Thr-45 contacts pyruvate. Tyr-133 acts as the Proton donor/acceptor in catalysis. Lys-161 (schiff-base intermediate with substrate) is an active-site residue. Residue Ile-203 coordinates pyruvate.

Belongs to the DapA family. In terms of assembly, homotetramer; dimer of dimers.

The protein resides in the cytoplasm. The catalysed reaction is L-aspartate 4-semialdehyde + pyruvate = (2S,4S)-4-hydroxy-2,3,4,5-tetrahydrodipicolinate + H2O + H(+). The protein operates within amino-acid biosynthesis; L-lysine biosynthesis via DAP pathway; (S)-tetrahydrodipicolinate from L-aspartate: step 3/4. Functionally, catalyzes the condensation of (S)-aspartate-beta-semialdehyde [(S)-ASA] and pyruvate to 4-hydroxy-tetrahydrodipicolinate (HTPA). This Klebsiella pneumoniae subsp. pneumoniae (strain ATCC 700721 / MGH 78578) protein is 4-hydroxy-tetrahydrodipicolinate synthase.